A 268-amino-acid chain; its full sequence is Mesoderm posterior protein 1 (268 aa).

The interval 17-93 (AAWGPTRRPP…RQSASEREKL (77 aa)) is disordered. The span at 36–48 (LVSSPDSWGSTPA) shows a compositional bias: polar residues. The segment covering 66–86 (APSVGRRGARSSRLGSGQRQS) has biased composition (low complexity). The region spanning 82 to 136 (GQRQSASEREKLRMRTLARALHELRRFLPPSVAPAGQSLTKIETLRLAIRYIGHL) is the bHLH domain. Residues 163-167 (CPLCP) carry the CPLCP motif. A run of 2 repeats spans residues 182 to 183 (GQ) and 184 to 185 (GQ). The segment at 182-185 (GQGQ) is 2 X 2 AA tandem repeats of G-Q.

It localises to the nucleus. Its function is as follows. Transcription factor. Plays a role in the epithelialization of somitic mesoderm and in the development of cardiac mesoderm. Defines the rostrocaudal patterning of the somites by participating in distinct Notch pathways. The chain is Mesoderm posterior protein 1 (MESP1) from Homo sapiens (Human).